The following is a 454-amino-acid chain: UPF0210 protein Ppro_0613 (454 aa).

This sequence belongs to the UPF0210 family. Homodimer.

The chain is UPF0210 protein Ppro_0613 from Pelobacter propionicus (strain DSM 2379 / NBRC 103807 / OttBd1).